The primary structure comprises 494 residues: Nuclear distribution protein PAC1 (494 aa).

A LisH domain is found at 14-46; it reads QKNELDKSVLRYLNWNYKQTVRHEHAQDYESVR. Residues 90-123 are a coiled coil; it reads NSIVRLQKKIIELEQNTETLVSQIKDLNTQVSEL. WD repeat units follow at residues 153-192, 196-244, 251-292, 295-334, 347-395, 415-454, and 457-492; these read NVES…IPLA, SHTK…CKFQ, GHEH…SLKT, PHSQ…SVGT, HFIE…LMAH, GHLS…HVWE, and HTGF…SNVF.

It belongs to the WD repeat LIS1/nudF family. As to quaternary structure, self-associates. Interacts with NDL1 and dynein.

Its subcellular location is the cytoplasm. It is found in the cytoskeleton. The protein resides in the spindle pole. Its function is as follows. Positively regulates the activity of the minus-end directed microtubule motor protein dynein. Plays a central role in positioning the mitotic spindle at the bud neck during cell division. Targets cytoplasmic dynein to microtubule plus ends, thereby promoting dynein-mediated microtubule sliding along the bud cortex and consequently the movement of the mitotic spindle to the bud neck. The polypeptide is Nuclear distribution protein PAC1 (Saccharomyces cerevisiae (strain RM11-1a) (Baker's yeast)).